A 262-amino-acid polypeptide reads, in one-letter code: Adenosylcobinamide-GDP ribazoletransferase (262 aa).

6 consecutive transmembrane segments (helical) span residues 43–63, 66–86, 120–140, 146–166, 191–211, and 242–262; these read YFGLVGLLIGLLSAIVFWLTQ, LPAGVSVLLAMLVGVLLTGGF, GAIALILALLLKWQLLVELAL, AGSALIVAHTVSRVVAASIIF, LFILVASGVLVLLFLKGLAAL, and AAQQICEIVCYLVLLIVGSIL.

It belongs to the CobS family. Mg(2+) is required as a cofactor.

The protein resides in the cell inner membrane. It catalyses the reaction alpha-ribazole + adenosylcob(III)inamide-GDP = adenosylcob(III)alamin + GMP + H(+). The enzyme catalyses alpha-ribazole 5'-phosphate + adenosylcob(III)inamide-GDP = adenosylcob(III)alamin 5'-phosphate + GMP + H(+). The protein operates within cofactor biosynthesis; adenosylcobalamin biosynthesis; adenosylcobalamin from cob(II)yrinate a,c-diamide: step 7/7. Its function is as follows. Joins adenosylcobinamide-GDP and alpha-ribazole to generate adenosylcobalamin (Ado-cobalamin). Also synthesizes adenosylcobalamin 5'-phosphate from adenosylcobinamide-GDP and alpha-ribazole 5'-phosphate. In Shewanella putrefaciens (strain CN-32 / ATCC BAA-453), this protein is Adenosylcobinamide-GDP ribazoletransferase.